An 806-amino-acid chain; its full sequence is Hyperosmolality-gated Ca2+ permeable channel 1.8 (806 aa).

10 helical membrane passes run 7 to 27 (IGVS…AFAV), 102 to 122 (IYTL…VVLV), 157 to 177 (KFFF…FMLY), 375 to 395 (LVIG…IAFV), 427 to 447 (FLPG…LLIM), 467 to 487 (YYYF…TAFE), 512 to 532 (ATFF…GEIL), 576 to 596 (FLLG…ILIF), 626 to 646 (VHGR…GLLA), and 650 to 670 (AADS…FHKY). The interval 726–786 (SSSSSSEKET…HYASAYEQSS (61 aa)) is disordered. The span at 731 to 750 (SEKETHQEETPEVRVDKHET) shows a compositional bias: basic and acidic residues. At threonine 735 the chain carries Phosphothreonine. Over residues 751-762 (QSSSPVTELGTS) the composition is skewed to polar residues. Low complexity predominate over residues 775 to 786 (SSHYASAYEQSS).

It belongs to the CSC1 (TC 1.A.17) family.

The protein localises to the golgi apparatus membrane. Its subcellular location is the cell membrane. Its function is as follows. Acts as an osmosensitive calcium-permeable cation channel. The protein is Hyperosmolality-gated Ca2+ permeable channel 1.8 of Arabidopsis thaliana (Mouse-ear cress).